The following is a 194-amino-acid chain: Small COPII coat GTPase SAR1B (194 aa).

An STAR; SAR1-N-terminal activation recruitment. Required for the activation and subsequent recruitment to ER membrane motif is present at residues 2-4 (FLV). The mediates recruitment to ER membranes stretch occupies residues 10–14 (MFLWL). GDP is bound by residues Asn-30, Ala-31, Gly-32, Lys-33, Thr-34, and Thr-35. Residue Asn-30 coordinates GTP. Positions 32, 33, 34, and 35 each coordinate GTP. Position 70 (Asp-70) interacts with Mg(2+). Positions 131, 133, and 172 each coordinate GDP. GTP-binding residues include Lys-131, Asp-133, and Ile-172.

Belongs to the small GTPase superfamily. SAR1 family. In terms of assembly, homodimer; upon association with membrane. Part of the coat protein complex II/COPII, composed of SEC23/24 and SEC13/31 heterodimers, that it helps recruit and assemble on endoplasmic reticulum (ER) membranes at ER exit sites.

It is found in the endoplasmic reticulum membrane. It localises to the golgi apparatus. The protein resides in the golgi stack membrane. The protein localises to the cytoplasm. Its subcellular location is the cytosol. The enzyme catalyses GTP + H2O = GDP + phosphate + H(+). With respect to regulation, small GTPases activation is mediated by guanine exchange factors (GEF), while inactivation through hydrolysis of the bound GTP is stimulated by GTPase activating proteins (GAP). In terms of biological role, small GTPase that cycles between an active GTP-bound and an inactive GDP-bound state and mainly functions in vesicle-mediated endoplasmic reticulum (ER) to Golgi transport. The active GTP-bound form inserts into the endoplasmic reticulum membrane where it recruits the remainder of the coat protein complex II/COPII. The coat protein complex II assembling and polymerizing on endoplasmic reticulum membrane is responsible for both the sorting of cargos and the deformation and budding of membranes into vesicles destined to the Golgi. The protein is Small COPII coat GTPase SAR1B (sarB) of Dictyostelium discoideum (Social amoeba).